Here is a 736-residue protein sequence, read N- to C-terminus: DNA topoisomerase 1 (736 aa).

Residues 2–113 (KHLIIVESPA…SYPRIVFHEI (112 aa)) form the Toprim domain. The Mg(2+) site is built by glutamate 8 and aspartate 82. Positions 129–552 (DMSKVNAQQA…DFYYPFMDKI (424 aa)) constitute a Topo IA-type catalytic domain. The interaction with DNA stretch occupies residues 163-168 (SAGRVQ). Tyrosine 297 serves as the catalytic O-(5'-phospho-DNA)-tyrosine intermediate. 4 C4-type zinc fingers span residues 572 to 598 (CPKC…YPKC), 616 to 642 (CEKC…YPEC), 663 to 689 (CPEC…YPKC), and 702 to 725 (CEKC…CIKC).

It belongs to the type IA topoisomerase family. Monomer. Mg(2+) is required as a cofactor.

The catalysed reaction is ATP-independent breakage of single-stranded DNA, followed by passage and rejoining.. Its function is as follows. Releases the supercoiling and torsional tension of DNA, which is introduced during the DNA replication and transcription, by transiently cleaving and rejoining one strand of the DNA duplex. Introduces a single-strand break via transesterification at a target site in duplex DNA. The scissile phosphodiester is attacked by the catalytic tyrosine of the enzyme, resulting in the formation of a DNA-(5'-phosphotyrosyl)-enzyme intermediate and the expulsion of a 3'-OH DNA strand. The free DNA strand then undergoes passage around the unbroken strand, thus removing DNA supercoils. Finally, in the religation step, the DNA 3'-OH attacks the covalent intermediate to expel the active-site tyrosine and restore the DNA phosphodiester backbone. The sequence is that of DNA topoisomerase 1 from Helicobacter pylori (strain ATCC 700392 / 26695) (Campylobacter pylori).